A 712-amino-acid polypeptide reads, in one-letter code: Patatin-like phospholipase domain-containing protein ACLA_029670 (712 aa).

Over residues 1 to 10 the composition is skewed to polar residues; that stretch reads MTSAEKSATR. The interval 1–20 is disordered; that stretch reads MTSAEKSATRNIYDPSALPD. Residues 85–105 traverse the membrane as a helical segment; that stretch reads WPFLFIVFAWITVLGIAYALT. One can recognise a PNPLA domain in the interval 275-466; it reads LCLSGGATFA…RTDIPIKALN (192 aa). A GXSXG motif is present at residues 306–310; the sequence is GTSGG. The active-site Nucleophile is Ser308. Asp453 (proton acceptor) is an active-site residue. Residues 649–664 show a composition bias toward basic and acidic residues; it reads FPERHSDYKDESHYTE. Residues 649 to 686 form a disordered region; that stretch reads FPERHSDYKDESHYTEVSDSLSTNSSRPHTPDARRGSI. Residues 665-676 are compositionally biased toward polar residues; the sequence is VSDSLSTNSSRP. Basic and acidic residues predominate over residues 677-686; that stretch reads HTPDARRGSI.

It belongs to the PLPL family.

It localises to the membrane. Probable lipid hydrolase. This is Patatin-like phospholipase domain-containing protein ACLA_029670 from Aspergillus clavatus (strain ATCC 1007 / CBS 513.65 / DSM 816 / NCTC 3887 / NRRL 1 / QM 1276 / 107).